Consider the following 2559-residue polypeptide: Stabilin-2 (2559 aa).

The N-terminal stretch at 1–28 is a signal peptide; that stretch reads MARSKLLLGKLLPLILIFLGLLVQNACS. Over 29-2464 the chain is Extracellular; sequence PTEAPELTKR…PPTAATAAHS (2436 aa). N-linked (GlcNAc...) asparagine glycosylation is present at N71. 5 consecutive EGF-like domains span residues 116 to 156, 164 to 201, 203 to 244, 245 to 284, and 330 to 370; these read DCME…TACE, FGPN…PRCD, PIPE…QTCK, PINP…QVCL, and MTDI…LNCY. Disulfide bonds link C120–C134, C128–C144, and C146–C155. The N-linked (GlcNAc...) asparagine glycan is linked to N167. 12 disulfides stabilise this stretch: C168–C179, C172–C189, C191–C200, C207–C218, C212–C230, C232–C243, C249–C260, C254–C270, C272–C283, C334–C346, C340–C356, and C358–C369. N-linked (GlcNAc...) asparagine glycosylation occurs at N345. FAS1 domains are found at residues 379-512 and 522-659; these read ELNT…DRAM and NPQQ…TGVL. N572, N626, N673, and N691 each carry an N-linked (GlcNAc...) asparagine glycan. In terms of domain architecture, EGF-like 6 spans 743-783; the sequence is DCNPCPGGFMNPCSGNGQCIDGLGGNGTCICEDGFQGSRCQ. Intrachain disulfides connect C747–C761, C755–C771, and C773–C782. N-linked (GlcNAc...) asparagine glycosylation is present at N768. N796 is a glycosylation site (N-linked (GlcNAc...) asparagine). 4 EGF-like domains span residues 833 to 873, 874 to 917, 918 to 960, and 961 to 1002; these read QTSA…TLCS, KKDP…RDCV, EINS…IDCE, and PIIS…VLCY. Cystine bridges form between C837–C850, C844–C859, C861–C872, C878–C893, C887–C903, C905–C916, C922–C936, C930–C946, C948–C959, C965–C978, C972–C988, and C990–C1001. N854 is a glycosylation site (N-linked (GlcNAc...) asparagine). The N-linked (GlcNAc...) asparagine glycan is linked to N933. FAS1 domains lie at 1002 to 1135 and 1145 to 1273; these read YGNV…NKVL and LPSL…EKVL. N-linked (GlcNAc...) asparagine glycans are attached at residues N1024, N1036, N1108, N1255, and N1283. The 66-residue stretch at 1350-1415 folds into the Laminin EGF-like 1 domain; sequence PQCQACPGKG…CSCVHGRCNQ (66 aa). Cystine bridges form between C1355–C1369, C1363–C1379, C1381–C1390, C1402–C1413, C1406–C1423, C1425–C1434, C1443–C1453, C1447–C1463, C1465–C1476, C1482–C1495, C1489–C1505, C1507–C1518, C1524–C1537, C1531–C1547, C1549–C1560, C1566–C1579, C1573–C1589, and C1591–C1602. 2 N-linked (GlcNAc...) asparagine glycosylation sites follow: N1374 and N1386. 4 consecutive EGF-like domains span residues 1439-1477, 1478-1519, 1520-1561, and 1562-1603; these read TTDN…TVCT, AINA…IVCL, EINP…KVCT, and LINV…IVCR. An N-linked (GlcNAc...) asparagine glycan is attached at N1444. N-linked (GlcNAc...) asparagine glycosylation occurs at N1472. A glycan (N-linked (GlcNAc...) asparagine) is linked at N1580. FAS1 domains are found at residues 1603-1731 and 1747-1888; these read RGSI…DTLL and VLLN…DCLL. A glycan (N-linked (GlcNAc...) asparagine) is linked at N1750. Residues 1965–2030 form the Laminin EGF-like 2 domain; that stretch reads PDCQACPGGP…GCSEHGQCDE (66 aa). 17 disulfide bridges follow: C1970–C1984, C1978–C1994, C1996–C2005, C2017–C2028, C2022–C2038, C2040–C2049, C2059–C2069, C2063–C2075, C2077–C2088, C2094–C2107, C2101–C2116, C2118–C2129, C2135–C2149, C2143–C2159, C2161–C2172, C2228–C2296, and C2252–C2273. N2001 carries an N-linked (GlcNAc...) asparagine glycan. EGF-like domains lie at 2055 to 2089, 2090 to 2130, and 2131 to 2173; these read VIPV…ITCT, VVDF…HSCT, and EIDP…RDCE. N2072 carries N-linked (GlcNAc...) asparagine glycosylation. The Link domain occupies 2206-2298; the sequence is GVFHLRSPLG…SEMWDVFCYR (93 aa). N-linked (GlcNAc...) asparagine glycans are attached at residues N2287, N2303, N2375, N2391, and N2400. The FAS1 7 domain maps to 2318 to 2452; it reads NGNLLQVLMS…GVLHIISEPL (135 aa). The chain crosses the membrane as a helical span at residues 2465–2485; that stretch reads GLGTGIFCAVVLVTGAIALAA. Over 2486-2559 the chain is Cytoplasmic; sequence YSYFRLNQRT…NSDPLGALRS (74 aa). S2503 bears the Phosphoserine mark. The interaction with TMSB4X stretch occupies residues 2510 to 2520; the sequence is LAFGKQQPESI. The interval 2514–2559 is disordered; it reads KQQPESITNPLYETSTPAAPEPSCDPFTDSGERELENSDPLGALRS. The segment covering 2516-2530 has biased composition (polar residues); the sequence is QPESITNPLYETSTP.

In terms of assembly, interacts with heparin, alpha-M/beta-2 integrin (ITGAM and ITGB2), and thymosin beta 4 (TMSB4X). Interacts with GULP1. Associates with clathrin and adapter protein AP-2; in liver sinusoidal endothelial cells (LSECs). In terms of processing, glycosylated. Proteolytically processed to yield a smaller protein. As to expression, expressed in endothelial sinuses of liver, lymph nodes, bone marrow, spleen and in specialised structures of eye, heart, brain and kidney. Expression is detected in corneal and lens epithelium, in mesenchymal cells of the heart valves, in the ependymal cells lining the ventricles in the brain, and in the prismatic epithelial cells covering the renal papillae.

The protein localises to the cytoplasm. The protein resides in the cell membrane. In terms of biological role, phosphatidylserine receptor that enhances the engulfment of apoptotic cells. Hyaluronan receptor that binds to and mediates endocytosis of hyaluronic acid (HA). Also acts, in different species, as a primary systemic scavenger receptor for heparin (Hep), chondroitin sulfate (CS), dermatan sulfate (DS), nonglycosaminoglycan (GAG), acetylated low-density lipoprotein (AcLDL), pro-collagen propeptides and advanced glycation end products (AGE). May serve to maintain tissue integrity by supporting extracellular matrix turnover or it may contribute to maintaining fluidity of bodily liquids by resorption of hyaluronan. Counter receptor which plays an important role in lymphocyte recruitment in the hepatic vasculature. Binds to both Gram-positive and Gram-negative bacteria and may play a role in defense against bacterial infection. The proteolytically processed short form also functions as an endocytosis receptor for heparin internalization as well as HA and CS. The sequence is that of Stabilin-2 from Mus musculus (Mouse).